Reading from the N-terminus, the 317-residue chain is Melanocyte-stimulating hormone receptor (317 aa).

The tract at residues 1-23 (MSGQGPQRRLLGSPNATSPTTPH) is disordered. At 1 to 37 (MSGQGPQRRLLGSPNATSPTTPHFKLAANQTGPRCLE) the chain is on the extracellular side. Asn-29 is a glycosylation site (N-linked (GlcNAc...) asparagine). Residues 38-63 (VSIPNGLFLSLGLVSVVENVLVVAAI) traverse the membrane as a helical segment. The Cytoplasmic portion of the chain corresponds to 64–72 (AKNRNLHSP). The helical transmembrane segment at 73–93 (MYYFIGCLAVSDLLVSVTNVL) threads the bilayer. Residues 94 to 118 (ETAVMLLVEAGALAAQAAVVQQLDD) lie on the Extracellular side of the membrane. The helical transmembrane segment at 119–140 (IIDVLICGSMVSSLCFLGAIAV) threads the bilayer. The Cytoplasmic segment spans residues 141–163 (DRYLSIFYALRYHSIVTLPRAWR). The helical transmembrane segment at 164–183 (AISAIWVASVLSSTLFIAYY) threads the bilayer. Residues 184–191 (NHTAVLLC) lie on the Extracellular side of the membrane. The helical transmembrane segment at 192–211 (LVSFFVAMLVLMAVLYVHML) threads the bilayer. The Cytoplasmic segment spans residues 212-240 (ARARQHARGIARLRKRQHSVHQGFGLKGA). The chain crosses the membrane as a helical span at residues 241-266 (ATLTILLGIFFLCWGPFFLHLSLMVL). At 267-279 (CPQHPICGCVFQN) the chain is on the extracellular side. A helical membrane pass occupies residues 280-300 (FNLFLTLIICNSIIDPFIYAF). Residues 301–317 (RSQELRKTLQEVVLCSW) lie on the Cytoplasmic side of the membrane. The S-palmitoyl cysteine moiety is linked to residue Cys-315.

Belongs to the G-protein coupled receptor 1 family. As to quaternary structure, interacts with MGRN1, but does not undergo MGRN1-mediated ubiquitination; this interaction competes with GNAS-binding and thus inhibits agonist-induced cAMP production. Interacts with OPN3; the interaction results in a decrease in MC1R-mediated cAMP signaling and ultimately a decrease in melanin production in melanocytes.

Its subcellular location is the cell membrane. Functionally, receptor for MSH (alpha, beta and gamma) and ACTH. The activity of this receptor is mediated by G proteins which activate adenylate cyclase. Mediates melanogenesis, the production of eumelanin (black/brown) and phaeomelanin (red/yellow), via regulation of cAMP signaling in melanocytes. This chain is Melanocyte-stimulating hormone receptor (MC1R), found in Vulpes vulpes (Red fox).